Reading from the N-terminus, the 512-residue chain is Tyrosine decarboxylase (512 aa).

3 residues coordinate L-tyrosine: proline 100, histidine 205, and histidine 320. Lysine 321 is subject to N6-(pyridoxal phosphate)lysine. Tyrosine 350 is an L-tyrosine binding site.

It belongs to the group II decarboxylase family. Homodimer. Pyridoxal 5'-phosphate is required as a cofactor. Mainly expressed in roots, stems and capsule walls.

The catalysed reaction is L-tyrosine + H(+) = tyramine + CO2. Its function is as follows. Tyrosine decarboxylase that converts tyrosine into tyramine, a precursor of isoquinoline alkaloids and various amides. In Papaver somniferum (Opium poppy), this protein is Tyrosine decarboxylase.